A 348-amino-acid polypeptide reads, in one-letter code: Phosphoribosylformylglycinamidine cyclo-ligase (348 aa).

This sequence belongs to the AIR synthase family.

The protein localises to the cytoplasm. The enzyme catalyses 2-formamido-N(1)-(5-O-phospho-beta-D-ribosyl)acetamidine + ATP = 5-amino-1-(5-phospho-beta-D-ribosyl)imidazole + ADP + phosphate + H(+). Its pathway is purine metabolism; IMP biosynthesis via de novo pathway; 5-amino-1-(5-phospho-D-ribosyl)imidazole from N(2)-formyl-N(1)-(5-phospho-D-ribosyl)glycinamide: step 2/2. This chain is Phosphoribosylformylglycinamidine cyclo-ligase, found in Cereibacter sphaeroides (strain ATCC 17025 / ATH 2.4.3) (Rhodobacter sphaeroides).